We begin with the raw amino-acid sequence, 277 residues long: Shikimate dehydrogenase (NADP(+)) (277 aa).

Shikimate-binding positions include 15 to 17 (SLS) and T62. K66 acts as the Proton acceptor in catalysis. Residues N87 and D102 each contribute to the shikimate site. NADP(+)-binding positions include 127–131 (GAGGA), 151–156 (NRTVDK), and I219. Y221 provides a ligand contact to shikimate. Position 242 (G242) interacts with NADP(+).

Belongs to the shikimate dehydrogenase family. As to quaternary structure, homodimer.

It catalyses the reaction shikimate + NADP(+) = 3-dehydroshikimate + NADPH + H(+). It functions in the pathway metabolic intermediate biosynthesis; chorismate biosynthesis; chorismate from D-erythrose 4-phosphate and phosphoenolpyruvate: step 4/7. In terms of biological role, involved in the biosynthesis of the chorismate, which leads to the biosynthesis of aromatic amino acids. Catalyzes the reversible NADPH linked reduction of 3-dehydroshikimate (DHSA) to yield shikimate (SA). This is Shikimate dehydrogenase (NADP(+)) from Bacillus thuringiensis subsp. konkukian (strain 97-27).